Here is a 619-residue protein sequence, read N- to C-terminus: MEQLSIQTDELQDQFSNCSPASVDSSYSSCSSVEDEIEIYTRLVRNEEPLRRDFFREMSKNSSCSSSFDYGEFGPSSSSRKGSKTTDADLDSLFHSLVETSDQVNTVPKPTKTEVESIPEEFEQKPSSSSHRLPSEMNASITHIKSELDPTMQAFQMPHNDLFLATAAPHYNPFALSNDFMPNPLMPSFTSPFYPQHFPVSDSRRGSQGTTSSSNNTGGTPSPHSSSLPTSPPQLQGFLRSFLNPDNLSTPTSFGVPSETALDADKMCAVCNDRAVCLHYGARTCEGCKGFFKRTVQKNSKYTCAGNKTCPIDKRYRSRCQYCRYQKCLEVGMVKEIVRHGSLSGRRGRLSSKTKLARSEDQPSPPLPLLALMGKAIEDHTNMTVVRQFMQPFDETIALRILHGELHATKKLLMAMPQISEIQPADFQILLSRSFFAIMAIRVANRCGNSTDTIMFESGELFSLNAFPACFQQIIRFMVDKARTFSSLVDWEPQAFAAFIALQFLAGNTEHNVLGLTNKPLVDQVQSTIINALKDHCSGSQNKLAKIVRLTQEFDVFHALGLQALDILYPSHQLPEEFMFLINLTRAPLRSTDAPPACGSPVAPSGSSLFNFQMGPAAF.

Residues 1–18 are compositionally biased toward polar residues; that stretch reads MEQLSIQTDELQDQFSNC. Disordered regions lie at residues 1–29, 58–86, 103–134, and 196–232; these read MEQLSIQTDELQDQFSNCSPASVDSSYSS, MSKNSSCSSSFDYGEFGPSSSSRKGSKTT, QVNTVPKPTKTEVESIPEEFEQKPSSSSHRLP, and QHFPVSDSRRGSQGTTSSSNNTGGTPSPHSSSLPTSP. Residues 19-29 are compositionally biased toward low complexity; the sequence is SPASVDSSYSS. The span at 125 to 134 shows a compositional bias: polar residues; that stretch reads KPSSSSHRLP. Residues 206 to 232 are compositionally biased toward low complexity; sequence GSQGTTSSSNNTGGTPSPHSSSLPTSP. The nuclear receptor DNA-binding region spans 265-340; it reads DKMCAVCNDR…VGMVKEIVRH (76 aa). NR C4-type zinc fingers lie at residues 268 to 288 and 304 to 328; these read CAVCNDRAVCLHYGARTCEGC and CAGNKTCPIDKRYRSRCQYCRYQKC. Residues 345 to 365 are disordered; the sequence is GRRGRLSSKTKLARSEDQPSP. The span at 346–356 shows a compositional bias: basic residues; sequence RRGRLSSKTKL. The NR LBD domain occupies 365 to 600; the sequence is PPLPLLALMG…STDAPPACGS (236 aa). An AF-2 region spans residues 589–600; sequence LRSTDAPPACGS.

It belongs to the nuclear hormone receptor family. NR4 subfamily. In hermaphrodites, expressed in the developing spermatheca and dorsal uterus. Expression includes the 8 cells of the dorsal somatic gonad primordium and the sujc cells that form the core of the spermatheca-uterine valve. Expressed in the precursor cells of the spermatheca-sheath lineages (SS cells) and in the precursors and descendents of the dorsal-uterine lineage (DU cells). In both hermaphroditic and male animals, expressed in a pair of head chemosensory neurons.

The protein localises to the nucleus. Its function is as follows. Transcriptional activator that induces gene expression by binding to the NGFI-B response element (NBRE) 5'-AAAGGTCA-3'. Required for proper morphogenesis of the spermatheca and the spermatheca-uterine valve formation. Promotes cell proliferation and differentiation of the spermatheca precursor cells during spermatheca development in larval stage L4. Might play a role in promoting G1/S phase progression in the spermatheca precursor cell lineage. Also required for the differentiation of the spermatheca-uterine junction core (sujc) cells which are generating the spermatheca-uterine valve. In Caenorhabditis elegans, this protein is Nuclear hormone receptor family member nhr-6 (nhr-6).